Here is a 405-residue protein sequence, read N- to C-terminus: Polyketide biosynthesis cytochrome P450 PksS (405 aa).

Residues 231 to 251 (LYSMLFLLVVAGLETTVNLLG) form a helical membrane-spanning segment. Cysteine 352 provides a ligand contact to heme.

The protein belongs to the cytochrome P450 family.

It localises to the cell membrane. Its pathway is antibiotic biosynthesis; bacillaene biosynthesis. Its function is as follows. Involved in the metabolism of the antibiotic polyketide bacillaene which is involved in secondary metabolism. The substrate is dihydrobacillaene. The sequence is that of Polyketide biosynthesis cytochrome P450 PksS (pksS) from Bacillus subtilis (strain 168).